The chain runs to 723 residues: Zinc finger CCCH domain-containing protein 11A (723 aa).

3 consecutive C3H1-type zinc fingers follow at residues 2 to 29 (SKQGDDCYFYFYSTCNKGDNCPFRHCEA), 31 to 57 (LGNETICTLWKEGRCFRNVCRFRHMEI), and 60 to 87 (KRSEIPCFWENQPGGCQKSNCAFHHTKG). Disordered regions lie at residues 142-208 (ENSE…KQDD), 223-256 (KKQKEKTKKQSEGPSGVPAHPLQSRTVPVPEKEN), 404-428 (KRAEGERKKQRILPPSVPGKVKLEE), 450-526 (EKAL…VKSL), and 565-681 (VKPS…APLS). Positions 160-175 (ADDDEDDDDQLSEEGE) are enriched in acidic residues. Residues 376 to 411 (KTFSEALAERKQRRLEEEKQKLEEFLTEKRAEGERK) are a coiled coil. The span at 511–522 (PSNQSAPNSKAQ) shows a compositional bias: polar residues. Over residues 609–620 (KKAALTAAPALP) the composition is skewed to low complexity. Residues 637-649 (LELQLGSQADSVE) show a composition bias toward polar residues. Low complexity predominate over residues 650–672 (QSGDSSSASASSQSVAKAQQLSS).

The protein resides in the nucleus speckle. Through its association with TREX complex components, may participate in the export and post-transcriptional coordination of selected mRNA transcripts. Binds RNA. The protein is Zinc finger CCCH domain-containing protein 11A (ZC3H11A) of Gallus gallus (Chicken).